A 253-amino-acid polypeptide reads, in one-letter code: 5'/3'-nucleotidase SurE (253 aa).

Residues D8, D9, S39, and N92 each coordinate a divalent metal cation.

It belongs to the SurE nucleotidase family. The cofactor is a divalent metal cation.

It is found in the cytoplasm. It carries out the reaction a ribonucleoside 5'-phosphate + H2O = a ribonucleoside + phosphate. The catalysed reaction is a ribonucleoside 3'-phosphate + H2O = a ribonucleoside + phosphate. It catalyses the reaction [phosphate](n) + H2O = [phosphate](n-1) + phosphate + H(+). Functionally, nucleotidase with a broad substrate specificity as it can dephosphorylate various ribo- and deoxyribonucleoside 5'-monophosphates and ribonucleoside 3'-monophosphates with highest affinity to 3'-AMP. Also hydrolyzes polyphosphate (exopolyphosphatase activity) with the preference for short-chain-length substrates (P20-25). Might be involved in the regulation of dNTP and NTP pools, and in the turnover of 3'-mononucleotides produced by numerous intracellular RNases (T1, T2, and F) during the degradation of various RNAs. This chain is 5'/3'-nucleotidase SurE, found in Shigella flexneri serotype 5b (strain 8401).